The following is a 1906-amino-acid chain: Serine protease/ABC transporter B family protein tagB (1906 aa).

An N-terminal signal peptide occupies residues M1 to L31. The segment at I96 to N134 is disordered. Residues P356–I763 enclose the Peptidase S8 domain. Catalysis depends on charge relay system residues D387 and H432. Residues N594, N621, and N672 are each glycosylated (N-linked (GlcNAc...) asparagine). S695 serves as the catalytic Charge relay system. N747 and N823 each carry an N-linked (GlcNAc...) asparagine glycan. The next 3 membrane-spanning stretches (helical) occupy residues Y1011–I1031, F1076–L1096, and F1121–I1141. The ABC transmembrane type-1 domain maps to L1080–Q1363. N-linked (GlcNAc...) asparagine glycosylation occurs at N1172. 3 helical membrane passes run L1210–I1230, W1309–Q1329, and F1332–S1352. The interval L1385–D1455 is disordered. Over residues L1396 to D1405 the composition is skewed to gly residues. Residues G1407 to K1420 are compositionally biased toward basic and acidic residues. The ABC transporter domain maps to I1518 to E1756. N1522 carries an N-linked (GlcNAc...) asparagine glycan. G1553–S1560 is an ATP binding site. The N-linked (GlcNAc...) asparagine glycan is linked to N1658. The interval D1757–R1906 is disordered. Composition is skewed to low complexity over residues N1765 to N1779 and E1814 to Q1871. Pro residues predominate over residues V1872–P1886.

In the C-terminal section; belongs to the ABC transporter superfamily. ABCB family. Multidrug resistance exporter (TC 3.A.1.201) subfamily. This sequence in the N-terminal section; belongs to the peptidase S8 family.

It localises to the membrane. In terms of biological role, intercellular communication via tagB may mediate integration of cellular differentiation with morphogenesis. The polypeptide is Serine protease/ABC transporter B family protein tagB (tagB) (Dictyostelium discoideum (Social amoeba)).